A 148-amino-acid chain; its full sequence is 3-dehydroquinate dehydratase (148 aa).

Residue Tyr23 is the Proton acceptor of the active site. Residues Asn74, His80, and Asp87 each coordinate substrate. The active-site Proton donor is the His100. Substrate is bound by residues Ile101–Ser102 and Arg111.

Belongs to the type-II 3-dehydroquinase family. In terms of assembly, homododecamer.

It catalyses the reaction 3-dehydroquinate = 3-dehydroshikimate + H2O. It participates in metabolic intermediate biosynthesis; chorismate biosynthesis; chorismate from D-erythrose 4-phosphate and phosphoenolpyruvate: step 3/7. Its function is as follows. Catalyzes a trans-dehydration via an enolate intermediate. The chain is 3-dehydroquinate dehydratase from Thermoanaerobacter pseudethanolicus (strain ATCC 33223 / 39E) (Clostridium thermohydrosulfuricum).